Consider the following 106-residue polypeptide: uncharacterized protein (106 aa).

It localises to the mitochondrion. This is an uncharacterized protein from Arabidopsis thaliana (Mouse-ear cress).